Reading from the N-terminus, the 393-residue chain is NAD(P)H-quinone oxidoreductase subunit H, chloroplastic (393 aa).

The protein belongs to the complex I 49 kDa subunit family. As to quaternary structure, NDH is composed of at least 16 different subunits, 5 of which are encoded in the nucleus.

The protein resides in the plastid. Its subcellular location is the chloroplast thylakoid membrane. It catalyses the reaction a plastoquinone + NADH + (n+1) H(+)(in) = a plastoquinol + NAD(+) + n H(+)(out). It carries out the reaction a plastoquinone + NADPH + (n+1) H(+)(in) = a plastoquinol + NADP(+) + n H(+)(out). In terms of biological role, NDH shuttles electrons from NAD(P)H:plastoquinone, via FMN and iron-sulfur (Fe-S) centers, to quinones in the photosynthetic chain and possibly in a chloroplast respiratory chain. The immediate electron acceptor for the enzyme in this species is believed to be plastoquinone. Couples the redox reaction to proton translocation, and thus conserves the redox energy in a proton gradient. This chain is NAD(P)H-quinone oxidoreductase subunit H, chloroplastic, found in Daucus carota (Wild carrot).